We begin with the raw amino-acid sequence, 166 residues long: Large ribosomal subunit protein uL10 (166 aa).

Belongs to the universal ribosomal protein uL10 family. In terms of assembly, part of the ribosomal stalk of the 50S ribosomal subunit. The N-terminus interacts with L11 and the large rRNA to form the base of the stalk. The C-terminus forms an elongated spine to which L12 dimers bind in a sequential fashion forming a multimeric L10(L12)X complex.

In terms of biological role, forms part of the ribosomal stalk, playing a central role in the interaction of the ribosome with GTP-bound translation factors. The chain is Large ribosomal subunit protein uL10 from Staphylococcus carnosus (strain TM300).